Consider the following 465-residue polypeptide: UDP-N-acetylmuramate--L-alanine ligase (465 aa).

114 to 120 (GTHGKTT) provides a ligand contact to ATP.

It belongs to the MurCDEF family.

Its subcellular location is the cytoplasm. It carries out the reaction UDP-N-acetyl-alpha-D-muramate + L-alanine + ATP = UDP-N-acetyl-alpha-D-muramoyl-L-alanine + ADP + phosphate + H(+). Its pathway is cell wall biogenesis; peptidoglycan biosynthesis. Cell wall formation. The sequence is that of UDP-N-acetylmuramate--L-alanine ligase from Chelativorans sp. (strain BNC1).